The following is a 1021-amino-acid chain: Sodium/potassium-transporting ATPase subunit alpha-1 (1021 aa).

Positions 1–5 are excised as a propeptide; that stretch reads MGKGV. Residues 1 to 11 are compositionally biased toward basic and acidic residues; that stretch reads MGKGVGRDKYE. Residues 1–36 are disordered; sequence MGKGVGRDKYEPAAVSEHGDKKKAKKERDMDELKKE. The Cytoplasmic portion of the chain corresponds to 6 to 85; it reads GRDKYEPAAV…NALTPPPTTP (80 aa). Position 9 is an N6-acetyllysine (lysine 9). Tyrosine 10 carries the post-translational modification Phosphotyrosine. Serine 16 is modified (phosphoserine; by PKC). Lysine 21 carries the N6-acetyllysine modification. The span at 26–36 shows a compositional bias: basic and acidic residues; the sequence is KERDMDELKKE. Residues serine 38 and serine 45 each carry the phosphoserine modification. The tract at residues 80-82 is phosphoinositide-3 kinase binding; that stretch reads PPP. The chain crosses the membrane as a helical span at residues 86-106; the sequence is EWVKFCRQLFGGFSMLLWIGA. Over 107–129 the chain is Extracellular; it reads VLCFLAYGIQAATEEEPQNDNLY. The chain crosses the membrane as a helical span at residues 130–150; it reads LGVVLSAVVIITGCFSYYQEA. Topologically, residues 151–286 are cytoplasmic; sequence KSSKIMESFK…GGQTPIAAEI (136 aa). At serine 226 the chain carries Phosphoserine. A Phosphotyrosine modification is found at tyrosine 258. The chain crosses the membrane as a helical span at residues 287–306; it reads EHFIHIITGVAVFLGVSFFI. The Extracellular segment spans residues 307–318; sequence LSLILEYTWLEA. Residues 319–336 form a helical membrane-spanning segment; the sequence is VIFLIGIIVANVPEGLLA. Over 337-770 the chain is Cytoplasmic; that stretch reads TVTVCLTLTA…EEGRLIFDNL (434 aa). The active-site 4-aspartylphosphate intermediate is aspartate 374. Phosphoserine occurs at positions 450 and 482. Lysine 485 lines the ATP pocket. Residue tyrosine 540 is modified to Phosphotyrosine. Residues 594–715 are mediates interaction with SCN7A; that stretch reads RAAVPDAVGK…QGAIVAVTGD (122 aa). Serine 666 is subject to Phosphoserine. Mg(2+) contacts are provided by aspartate 715 and aspartate 719. A helical transmembrane segment spans residues 771 to 790; that stretch reads KKSIAYTLTSNIPEITPFLI. The Extracellular segment spans residues 791 to 800; sequence FIIANIPLPL. Residues 801-821 form a helical membrane-spanning segment; it reads GTVTILCIDLGTDMVPAISLA. At 822 to 841 the chain is on the cytoplasmic side; the sequence is YEQAESDIMKRQPRNPQTDK. A helical membrane pass occupies residues 842–864; that stretch reads LVNERLISMAYGQIGMIQALGGF. The Extracellular portion of the chain corresponds to 865 to 916; the sequence is FTYFVIMAENGFLPNHLLGIRVTWDDRWINDVEDSYGQQWTYEQRKIVEFTC. Residues 917 to 936 form a helical membrane-spanning segment; that stretch reads HTAFFVSIVVVQWADLVICK. Residues 937 to 949 lie on the Cytoplasmic side of the membrane; the sequence is TRRNSVFQQGMKN. Serine 941 carries the post-translational modification Phosphoserine; by PKA. Residues 950 to 968 form a helical membrane-spanning segment; sequence KILIFGLFEETALAAFLSY. Topologically, residues 969–983 are extracellular; it reads CPGMGVALRMYPLKP. Residues 984–1004 traverse the membrane as a helical segment; sequence TWWFCAFPYSLLIFVYDEVRK. Over 1005-1021 the chain is Cytoplasmic; the sequence is LIIRRRPGGWVEKETYY.

This sequence belongs to the cation transport ATPase (P-type) (TC 3.A.3) family. Type IIC subfamily. The sodium/potassium-transporting ATPase is composed of a catalytic alpha subunit, an auxiliary non-catalytic beta subunit and an additional regulatory subunit. Interacts with regulatory subunit FXYD1. Interacts with regulatory subunit FXYD3. Interacts with SIK1. Interacts with SLC35G1 and STIM1. Interacts with CLN3; this interaction regulates the sodium/potassium-transporting ATPase complex localization at the plasma membrane. Interacts with SCN7A; activates ATP1A1 P-type sodium:potassium-exchanging transporter activity which indirectly signals to nearby neurons to regulate sodium homeostasis. Post-translationally, phosphorylation on Tyr-10 modulates pumping activity. Phosphorylation of Ser-941 by PKA modulates the response of ATP1A1 to PKC. Dephosphorylation by protein phosphatase 2A (PP2A) following increases in intracellular sodium, leading to increase catalytic activity.

The protein resides in the cell membrane. Its subcellular location is the basolateral cell membrane. It localises to the sarcolemma. The protein localises to the cell projection. It is found in the axon. The protein resides in the melanosome. The enzyme catalyses K(+)(out) + Na(+)(in) + ATP + H2O = K(+)(in) + Na(+)(out) + ADP + phosphate + H(+). In terms of biological role, this is the catalytic component of the active enzyme, which catalyzes the hydrolysis of ATP coupled with the exchange of sodium and potassium ions across the plasma membrane. This action creates the electrochemical gradient of sodium and potassium ions, providing the energy for active transport of various nutrients. Could also be part of an osmosensory signaling pathway that senses body-fluid sodium levels and controls salt intake behavior as well as voluntary water intake to regulate sodium homeostasis. The sequence is that of Sodium/potassium-transporting ATPase subunit alpha-1 (ATP1A1) from Bos taurus (Bovine).